Reading from the N-terminus, the 399-residue chain is Protein translocase subunit SecD (399 aa).

6 consecutive transmembrane segments (helical) span residues 7–27 (IKTA…LTFP), 239–259 (VIGA…LGLV), 262–282 (IALL…NATL), 286–306 (GVAG…LIFA), 329–351 (ALRA…FYFG), and 357–381 (GFAV…RTLL).

This sequence belongs to the SecD/SecF family. SecD subfamily. In terms of assembly, forms a complex with SecF. Part of the essential Sec protein translocation apparatus which comprises SecA, SecYEG and auxiliary proteins SecDF. Other proteins may also be involved.

The protein localises to the cell inner membrane. Part of the Sec protein translocase complex. Interacts with the SecYEG preprotein conducting channel. SecDF uses the proton motive force (PMF) to complete protein translocation after the ATP-dependent function of SecA. The chain is Protein translocase subunit SecD from Dictyoglomus turgidum (strain DSM 6724 / Z-1310).